Here is a 237-residue protein sequence, read N- to C-terminus: Ribosomal RNA small subunit methyltransferase G (237 aa).

S-adenosyl-L-methionine-binding positions include Gly78, Phe83, 129–130 (AE), and Arg148. The tract at residues 218 to 237 (KKETPNKFPRKAGMPNKRPL) is disordered.

Belongs to the methyltransferase superfamily. RNA methyltransferase RsmG family.

The protein localises to the cytoplasm. Specifically methylates the N7 position of a guanine in 16S rRNA. In Streptococcus suis (strain 98HAH33), this protein is Ribosomal RNA small subunit methyltransferase G.